Consider the following 223-residue polypeptide: 23 kDa piroplasm membrane protein (223 aa).

Residues 1-19 (MHKFTKVFFVAILVHTLKS) form the signal peptide. At 20–197 (GLVFTPVSGT…EEEKSDKKKY (178 aa)) the chain is on the extracellular side. N-linked (GlcNAc...) asparagine glycosylation occurs at Asn69. Residues 198 to 218 (VLMVVVVVVFVVVASLVVFLV) form a helical membrane-spanning segment. Residues 219-223 (KFCLK) lie on the Cytoplasmic side of the membrane.

It is found in the membrane. The chain is 23 kDa piroplasm membrane protein from Theileria buffeli.